Reading from the N-terminus, the 425-residue chain is Serine--tRNA ligase (425 aa).

230 to 232 provides a ligand contact to L-serine; sequence TSE. An ATP-binding site is contributed by 261–263; sequence RKE. Position 284 (Glu-284) interacts with L-serine. Residue 348-351 participates in ATP binding; the sequence is EISS. Position 385 (Ser-385) interacts with L-serine.

It belongs to the class-II aminoacyl-tRNA synthetase family. Type-1 seryl-tRNA synthetase subfamily. As to quaternary structure, homodimer. The tRNA molecule binds across the dimer.

Its subcellular location is the cytoplasm. The enzyme catalyses tRNA(Ser) + L-serine + ATP = L-seryl-tRNA(Ser) + AMP + diphosphate + H(+). It carries out the reaction tRNA(Sec) + L-serine + ATP = L-seryl-tRNA(Sec) + AMP + diphosphate + H(+). It participates in aminoacyl-tRNA biosynthesis; selenocysteinyl-tRNA(Sec) biosynthesis; L-seryl-tRNA(Sec) from L-serine and tRNA(Sec): step 1/1. Functionally, catalyzes the attachment of serine to tRNA(Ser). Is also able to aminoacylate tRNA(Sec) with serine, to form the misacylated tRNA L-seryl-tRNA(Sec), which will be further converted into selenocysteinyl-tRNA(Sec). In Wolbachia pipientis wMel, this protein is Serine--tRNA ligase.